The chain runs to 269 residues: 3-methyl-2-oxobutanoate hydroxymethyltransferase (269 aa).

Mg(2+) is bound by residues D50 and D89. 3-methyl-2-oxobutanoate contacts are provided by residues 50–51 (DS), D89, and K118. Residue E120 coordinates Mg(2+). The active-site Proton acceptor is E187.

The protein belongs to the PanB family. In terms of assembly, homodecamer; pentamer of dimers. Mg(2+) serves as cofactor.

The protein localises to the cytoplasm. It carries out the reaction 3-methyl-2-oxobutanoate + (6R)-5,10-methylene-5,6,7,8-tetrahydrofolate + H2O = 2-dehydropantoate + (6S)-5,6,7,8-tetrahydrofolate. It participates in cofactor biosynthesis; (R)-pantothenate biosynthesis; (R)-pantoate from 3-methyl-2-oxobutanoate: step 1/2. Functionally, catalyzes the reversible reaction in which hydroxymethyl group from 5,10-methylenetetrahydrofolate is transferred onto alpha-ketoisovalerate to form ketopantoate. This is 3-methyl-2-oxobutanoate hydroxymethyltransferase from Nitrosomonas europaea (strain ATCC 19718 / CIP 103999 / KCTC 2705 / NBRC 14298).